The sequence spans 787 residues: Lysine-specific demethylase JMJ13 (787 aa).

The JmjN domain maps to Cys-103 to Pro-144. The 171-residue stretch at Ser-250 to Ala-420 folds into the JmjC domain. Fe cation contacts are provided by His-293, Glu-295, and His-388. Zn(2+) is bound by residues Cys-500, Cys-503, Cys-514, Cys-516, His-519, Cys-522, His-525, and Cys-534. Residues Cys-500–Ala-551 form a C4HCHC zinc finger. A C5HC2 zinc finger spans residues Cys-500–Ala-551. One can recognise an FYR N-terminal domain in the interval Val-617–Glu-675. In terms of domain architecture, FYR C-terminal spans Leu-677–Thr-756. A disordered region spans residues Glu-712–Ile-769. Positions Asn-752–Gln-759 match the Nuclear localization signal motif.

This sequence belongs to the JARID1 histone demethylase family. The cofactor is Fe(2+). Mostly expressed in leaves, and, to a lower extent, in inflorescences, roots, siliques and stems.

The protein resides in the nucleus. It catalyses the reaction N(6),N(6),N(6)-trimethyl-L-lysyl(27)-[histone H3] + 2-oxoglutarate + O2 = N(6),N(6)-dimethyl-L-lysyl(27)-[histone H3] + formaldehyde + succinate + CO2. Functionally, histone demethylase that demethylates 'Lys-27' (H3K27me) of histone H3 with a specific activity for H3K27me3 and involved in the regulation of gene expression. Acts as a temperature and photoperiod dependent flowering repressor. This Arabidopsis thaliana (Mouse-ear cress) protein is Lysine-specific demethylase JMJ13.